A 116-amino-acid chain; its full sequence is Small ribosomal subunit protein bS6 (116 aa).

Residues 94-116 (ESITEPSPLTKPKEDRKGDSEAA) form a disordered region. The segment covering 104 to 116 (KPKEDRKGDSEAA) has biased composition (basic and acidic residues).

This sequence belongs to the bacterial ribosomal protein bS6 family.

Functionally, binds together with bS18 to 16S ribosomal RNA. In Idiomarina loihiensis (strain ATCC BAA-735 / DSM 15497 / L2-TR), this protein is Small ribosomal subunit protein bS6.